Here is a 454-residue protein sequence, read N- to C-terminus: tRNA modification GTPase MnmE (454 aa).

(6S)-5-formyl-5,6,7,8-tetrahydrofolate-binding residues include R23, E80, and K120. In terms of domain architecture, TrmE-type G spans 216-377; it reads GMKVVIAGRP…LRDHLKQSMG (162 aa). Residue N226 coordinates K(+). GTP is bound by residues 226–231, 245–251, 270–273, 335–338, and 358–360; these read NAGKSS, TDIAGTT, DTAG, NKAD, and SAR. S230 provides a ligand contact to Mg(2+). K(+)-binding residues include T245, I247, and T250. T251 provides a ligand contact to Mg(2+). K454 contributes to the (6S)-5-formyl-5,6,7,8-tetrahydrofolate binding site.

It belongs to the TRAFAC class TrmE-Era-EngA-EngB-Septin-like GTPase superfamily. TrmE GTPase family. Homodimer. Heterotetramer of two MnmE and two MnmG subunits. The cofactor is K(+).

It localises to the cytoplasm. Its function is as follows. Exhibits a very high intrinsic GTPase hydrolysis rate. Involved in the addition of a carboxymethylaminomethyl (cmnm) group at the wobble position (U34) of certain tRNAs, forming tRNA-cmnm(5)s(2)U34. The chain is tRNA modification GTPase MnmE from Yersinia pestis.